The chain runs to 433 residues: Xylose isomerase (433 aa).

Active-site residues include His99 and Asp102. Residues Glu230, Glu266, His269, Asp294, Asp305, Asp307, and Asp337 each coordinate Mg(2+).

It belongs to the xylose isomerase family. Homotetramer. Mg(2+) serves as cofactor.

Its subcellular location is the cytoplasm. It carries out the reaction alpha-D-xylose = alpha-D-xylulofuranose. The polypeptide is Xylose isomerase (Cereibacter sphaeroides (strain ATCC 17025 / ATH 2.4.3) (Rhodobacter sphaeroides)).